The following is a 984-amino-acid chain: Probable beta-galactosidase C (984 aa).

Residues 1-23 (MRLLSFIYLVWLALLTGTPQVSA) form the signal peptide. Positions 82, 127, 128, 129, and 187 each coordinate substrate. The Proton donor role is filled by Glu-188. Asn-197 carries N-linked (GlcNAc...) asparagine glycosylation. Tyr-251 contributes to the substrate binding site. Cys-257 and Cys-304 are disulfide-bonded. The N-linked (GlcNAc...) asparagine glycan is linked to Asn-276. Glu-287 acts as the Nucleophile in catalysis. Residue Tyr-353 coordinates substrate. 10 N-linked (GlcNAc...) asparagine glycosylation sites follow: Asn-391, Asn-421, Asn-434, Asn-517, Asn-602, Asn-677, Asn-715, Asn-720, Asn-759, and Asn-805.

The protein belongs to the glycosyl hydrolase 35 family.

It is found in the secreted. It catalyses the reaction Hydrolysis of terminal non-reducing beta-D-galactose residues in beta-D-galactosides.. Its function is as follows. Cleaves beta-linked terminal galactosyl residues from gangliosides, glycoproteins, and glycosaminoglycans. This Aspergillus flavus (strain ATCC 200026 / FGSC A1120 / IAM 13836 / NRRL 3357 / JCM 12722 / SRRC 167) protein is Probable beta-galactosidase C (lacC).